The primary structure comprises 263 residues: Insertion sequence IS21-like putative ATP-binding protein (263 aa).

An ATP-binding site is contributed by 114–121; it reads GPSGTGKT.

Belongs to the IS21/IS1162 putative ATP-binding protein family.

The chain is Insertion sequence IS21-like putative ATP-binding protein (tnpB) from Bacteroides fragilis.